Reading from the N-terminus, the 277-residue chain is Formamidopyrimidine-DNA glycosylase (277 aa).

The active-site Schiff-base intermediate with DNA is the Pro-2. Residue Glu-3 is the Proton donor of the active site. Lys-58 (proton donor; for beta-elimination activity) is an active-site residue. His-94, Arg-113, and Arg-156 together coordinate DNA. The segment at 241 to 277 (LVYGREGVPCPNCGAEHPIQRITQAGRSTFFCPTCQK) adopts an FPG-type zinc-finger fold. Arg-267 (proton donor; for delta-elimination activity) is an active-site residue.

It belongs to the FPG family. Monomer. Zn(2+) is required as a cofactor.

It carries out the reaction Hydrolysis of DNA containing ring-opened 7-methylguanine residues, releasing 2,6-diamino-4-hydroxy-5-(N-methyl)formamidopyrimidine.. The catalysed reaction is 2'-deoxyribonucleotide-(2'-deoxyribose 5'-phosphate)-2'-deoxyribonucleotide-DNA = a 3'-end 2'-deoxyribonucleotide-(2,3-dehydro-2,3-deoxyribose 5'-phosphate)-DNA + a 5'-end 5'-phospho-2'-deoxyribonucleoside-DNA + H(+). Functionally, involved in base excision repair of DNA damaged by oxidation or by mutagenic agents. Acts as a DNA glycosylase that recognizes and removes damaged bases. Has a preference for oxidized purines, such as 7,8-dihydro-8-oxoguanine (8-oxoG). Has AP (apurinic/apyrimidinic) lyase activity and introduces nicks in the DNA strand. Cleaves the DNA backbone by beta-delta elimination to generate a single-strand break at the site of the removed base with both 3'- and 5'-phosphates. This Gluconobacter oxydans (strain 621H) (Gluconobacter suboxydans) protein is Formamidopyrimidine-DNA glycosylase.